A 155-amino-acid polypeptide reads, in one-letter code: uncharacterized protein (155 aa).

Residues 28–38 (KKGKDRPREDG) show a composition bias toward basic and acidic residues. A disordered region spans residues 28-52 (KKGKDRPREDGTQQQPSESKGEAAC).

This is an uncharacterized protein from Dryophytes versicolor (chameleon treefrog).